Reading from the N-terminus, the 255-residue chain is Pre-miRNA 5'-monophosphate methyltransferase (255 aa).

Residues arginine 32, asparagine 66, aspartate 96, 121–122 (DI), and methionine 150 each bind S-adenosyl-L-methionine. The Bin3-type SAM domain maps to 41-253 (LHKLFRKPAE…SLLLFKIQRH (213 aa)).

The protein belongs to the methyltransferase superfamily.

Its subcellular location is the cytoplasm. It carries out the reaction a 5'-end 5'-phospho-ribonucleoside-RNA + S-adenosyl-L-methionine = a 5'-end (5'-methylphospho)-ribonucleoside-RNA + S-adenosyl-L-homocysteine. It catalyses the reaction a 5'-end 5'-phospho-ribonucleoside-RNA + 2 S-adenosyl-L-methionine = a 5'-end (5'-bismethylphospho)-ribonucleoside-RNA + 2 S-adenosyl-L-homocysteine. Its function is as follows. O-methyltransferase that specifically monomethylates 5'-monophosphate of cytoplasmic histidyl tRNA (tRNA(His)), acting as a capping enzyme by protecting tRNA(His) from cleavage by DICER1. Also able, with less efficiently, to methylate the 5' monophosphate of a subset of pre-miRNAs, acting as a negative regulator of miRNA processing. The 5' monophosphate of pre-miRNAs is recognized by DICER1 and is required for pre-miRNAs processing: methylation at this position reduces the processing of pre-miRNAs by DICER1. Was also reported to mediate dimethylation of pre-miR-145; however dimethylation cannot be reproduced by another group which observes a monomethylation of pre-miR-145. The polypeptide is Pre-miRNA 5'-monophosphate methyltransferase (bcdin3d) (Xenopus laevis (African clawed frog)).